Consider the following 129-residue polypeptide: Small ribosomal subunit protein uS11 (129 aa).

This sequence belongs to the universal ribosomal protein uS11 family. In terms of assembly, part of the 30S ribosomal subunit. Interacts with proteins S7 and S18. Binds to IF-3.

In terms of biological role, located on the platform of the 30S subunit, it bridges several disparate RNA helices of the 16S rRNA. Forms part of the Shine-Dalgarno cleft in the 70S ribosome. The polypeptide is Small ribosomal subunit protein uS11 (Staphylococcus haemolyticus (strain JCSC1435)).